Consider the following 365-residue polypeptide: tRNA N6-adenosine threonylcarbamoyltransferase (365 aa).

Fe cation-binding residues include His119 and His123. Substrate contacts are provided by residues 141–145, Asp174, Gly187, and Asn288; that span reads LVSGG. Fe cation is bound at residue Asp316.

This sequence belongs to the KAE1 / TsaD family. Requires Fe(2+) as cofactor.

It localises to the cytoplasm. It catalyses the reaction L-threonylcarbamoyladenylate + adenosine(37) in tRNA = N(6)-L-threonylcarbamoyladenosine(37) in tRNA + AMP + H(+). Required for the formation of a threonylcarbamoyl group on adenosine at position 37 (t(6)A37) in tRNAs that read codons beginning with adenine. Is involved in the transfer of the threonylcarbamoyl moiety of threonylcarbamoyl-AMP (TC-AMP) to the N6 group of A37, together with TsaE and TsaB. TsaD likely plays a direct catalytic role in this reaction. This chain is tRNA N6-adenosine threonylcarbamoyltransferase, found in Rhizobium leguminosarum bv. trifolii (strain WSM2304).